Reading from the N-terminus, the 503-residue chain is Aromatase 1 (503 aa).

A heme-binding site is contributed by Cys437.

This sequence belongs to the cytochrome P450 family. Heme is required as a cofactor.

It localises to the membrane. It carries out the reaction testosterone + 3 reduced [NADPH--hemoprotein reductase] + 3 O2 = 17beta-estradiol + formate + 3 oxidized [NADPH--hemoprotein reductase] + 4 H2O + 4 H(+). The enzyme catalyses androst-4-ene-3,17-dione + 3 reduced [NADPH--hemoprotein reductase] + 3 O2 = estrone + formate + 3 oxidized [NADPH--hemoprotein reductase] + 4 H2O + 4 H(+). Its function is as follows. Catalyzes the formation of aromatic C18 estrogens from C19 androgens. The chain is Aromatase 1 (CYP19A1) from Sus scrofa (Pig).